The primary structure comprises 348 residues: Ribonuclease H (348 aa).

The span at 54-65 (NTTSNYGSSTHA) shows a compositional bias: polar residues. The disordered stretch occupies residues 54-81 (NTTSNYGSSTHAGGQVSKPHTTQKRVHR). Residues 184–346 (YNKSMNVYCD…ADFLAKKGAS (163 aa)) enclose the RNase H type-1 domain. Residues Asp193, Glu235, Asp264, and Asp338 each contribute to the Mg(2+) site.

It belongs to the RNase H family. The cofactor is Mg(2+).

The enzyme catalyses Endonucleolytic cleavage to 5'-phosphomonoester.. Its function is as follows. Endonuclease that specifically degrades the RNA of RNA-DNA hybrids. This chain is Ribonuclease H (RNH1), found in Saccharomyces cerevisiae (strain ATCC 204508 / S288c) (Baker's yeast).